The chain runs to 402 residues: Exodeoxyribonuclease 7 large subunit (402 aa).

Belongs to the XseA family. In terms of assembly, heterooligomer composed of large and small subunits.

It is found in the cytoplasm. It carries out the reaction Exonucleolytic cleavage in either 5'- to 3'- or 3'- to 5'-direction to yield nucleoside 5'-phosphates.. Its function is as follows. Bidirectionally degrades single-stranded DNA into large acid-insoluble oligonucleotides, which are then degraded further into small acid-soluble oligonucleotides. This is Exodeoxyribonuclease 7 large subunit from Streptomyces coelicolor (strain ATCC BAA-471 / A3(2) / M145).